We begin with the raw amino-acid sequence, 274 residues long: 3-methyl-2-oxobutanoate hydroxymethyltransferase (274 aa).

Residues D54 and D93 each contribute to the Mg(2+) site. 3-methyl-2-oxobutanoate-binding positions include 54 to 55 (DS), D93, and K121. Mg(2+) is bound at residue E123. E190 acts as the Proton acceptor in catalysis.

Belongs to the PanB family. In terms of assembly, homodecamer; pentamer of dimers. The cofactor is Mg(2+).

It is found in the cytoplasm. It catalyses the reaction 3-methyl-2-oxobutanoate + (6R)-5,10-methylene-5,6,7,8-tetrahydrofolate + H2O = 2-dehydropantoate + (6S)-5,6,7,8-tetrahydrofolate. Its pathway is cofactor biosynthesis; (R)-pantothenate biosynthesis; (R)-pantoate from 3-methyl-2-oxobutanoate: step 1/2. Its function is as follows. Catalyzes the reversible reaction in which hydroxymethyl group from 5,10-methylenetetrahydrofolate is transferred onto alpha-ketoisovalerate to form ketopantoate. This Ralstonia nicotianae (strain ATCC BAA-1114 / GMI1000) (Ralstonia solanacearum) protein is 3-methyl-2-oxobutanoate hydroxymethyltransferase.